The sequence spans 260 residues: Small ribosomal subunit protein eS1 (260 aa).

Over residues 1-18 (MAVGKNKRMSKGKKGGKK) the composition is skewed to basic residues. Residues 1-20 (MAVGKNKRMSKGKKGGKKKA) are disordered.

The protein belongs to the eukaryotic ribosomal protein eS1 family. Component of the small ribosomal subunit. Mature ribosomes consist of a small (40S) and a large (60S) subunit. The 40S subunit contains about 33 different proteins and 1 molecule of RNA (18S). The 60S subunit contains about 49 different proteins and 3 molecules of RNA (25S, 5.8S and 5S).

It is found in the cytoplasm. This is Small ribosomal subunit protein eS1 from Ostreococcus lucimarinus (strain CCE9901).